The chain runs to 207 residues: Thiamine-phosphate synthase (207 aa).

4-amino-2-methyl-5-(diphosphooxymethyl)pyrimidine is bound by residues 37–41 (QYRHK) and Asn69. Residues Asp70 and Asp89 each contribute to the Mg(2+) site. Residues Ser108 and Lys138 each coordinate 4-amino-2-methyl-5-(diphosphooxymethyl)pyrimidine. 2-[(2R,5Z)-2-carboxy-4-methylthiazol-5(2H)-ylidene]ethyl phosphate-binding positions include Gly165 and 185–186 (IS).

This sequence belongs to the thiamine-phosphate synthase family. Mg(2+) serves as cofactor.

The enzyme catalyses 2-[(2R,5Z)-2-carboxy-4-methylthiazol-5(2H)-ylidene]ethyl phosphate + 4-amino-2-methyl-5-(diphosphooxymethyl)pyrimidine + 2 H(+) = thiamine phosphate + CO2 + diphosphate. It catalyses the reaction 2-(2-carboxy-4-methylthiazol-5-yl)ethyl phosphate + 4-amino-2-methyl-5-(diphosphooxymethyl)pyrimidine + 2 H(+) = thiamine phosphate + CO2 + diphosphate. The catalysed reaction is 4-methyl-5-(2-phosphooxyethyl)-thiazole + 4-amino-2-methyl-5-(diphosphooxymethyl)pyrimidine + H(+) = thiamine phosphate + diphosphate. The protein operates within cofactor biosynthesis; thiamine diphosphate biosynthesis; thiamine phosphate from 4-amino-2-methyl-5-diphosphomethylpyrimidine and 4-methyl-5-(2-phosphoethyl)-thiazole: step 1/1. Its function is as follows. Condenses 4-methyl-5-(beta-hydroxyethyl)thiazole monophosphate (THZ-P) and 2-methyl-4-amino-5-hydroxymethyl pyrimidine pyrophosphate (HMP-PP) to form thiamine monophosphate (TMP). The chain is Thiamine-phosphate synthase from Janthinobacterium sp. (strain Marseille) (Minibacterium massiliensis).